A 165-amino-acid polypeptide reads, in one-letter code: Shikimate kinase (165 aa).

12 to 17 (GCGKST) serves as a coordination point for ATP. Serine 16 lines the Mg(2+) pocket. Aspartate 34, arginine 57, and glycine 79 together coordinate substrate. An ATP-binding site is contributed by arginine 116. A substrate-binding site is contributed by arginine 133.

This sequence belongs to the shikimate kinase family. In terms of assembly, monomer. Mg(2+) is required as a cofactor.

It localises to the cytoplasm. It carries out the reaction shikimate + ATP = 3-phosphoshikimate + ADP + H(+). The protein operates within metabolic intermediate biosynthesis; chorismate biosynthesis; chorismate from D-erythrose 4-phosphate and phosphoenolpyruvate: step 5/7. Catalyzes the specific phosphorylation of the 3-hydroxyl group of shikimic acid using ATP as a cosubstrate. In Clostridium botulinum (strain Eklund 17B / Type B), this protein is Shikimate kinase.